The primary structure comprises 443 residues: Serine transporter (443 aa).

11 consecutive transmembrane segments (helical) span residues 38 to 60 (TGWV…PVQV), 65 to 87 (LWVF…RLFI), 111 to 131 (WGIL…FVYS), 150 to 170 (GLLS…VAIS), 183 to 203 (GMVL…VGMW), 215 to 235 (GLLV…ILFI), 265 to 285 (IAFG…TLAM), 319 to 339 (VSVI…YLGF), 368 to 388 (GIMI…APVL), 390 to 410 (FTSI…AWLV), and 422 to 442 (MSLY…FLAF).

The protein belongs to the amino acid/polyamine transporter 2 family. SdaC/TdcC subfamily.

It is found in the cell inner membrane. Transports both D- and L-serine; allows growth of strain CFT073 cells normally unable to transport D-serine on that substrate. Transport relies on the H(+) gradient and is not competed by L-threonine. May play a role in L-cysteine detoxification. The chain is Serine transporter from Escherichia coli O157:H7.